Here is a 185-residue protein sequence, read N- to C-terminus: MKRWYVVHAYSGFEKSVAQALRDRISRIEIQDRFGDVLVPAEEVVEMRSGQKRRSEHKFFPGYVLIQIETYYEGGVPRIDNECWHLVKETPKVMGFIGGTADRPLPISSDEADVILRRVQDGAEKPRPKVLFEPGQMVRVIDGPFNDFDGLVEEVNYEKNRLRVAVLIFGRPTPVDLDFGQVQKS.

In terms of domain architecture, KOW spans 134–162; that stretch reads PGQMVRVIDGPFNDFDGLVEEVNYEKNRL.

This sequence belongs to the NusG family.

Participates in transcription elongation, termination and antitermination. The sequence is that of Transcription termination/antitermination protein NusG from Xylella fastidiosa (strain Temecula1 / ATCC 700964).